The primary structure comprises 550 residues: Methionine--tRNA ligase (550 aa).

The 'HIGH' region motif lies at 13-23; that stretch reads PYANGPLHFGH. 4 residues coordinate Zn(2+): cysteine 145, cysteine 148, cysteine 158, and cysteine 161. The 'KMSKS' region motif lies at 331–335; that stretch reads QFSKS. Lysine 334 is a binding site for ATP.

Belongs to the class-I aminoacyl-tRNA synthetase family. MetG type 1 subfamily. Monomer. The cofactor is Zn(2+).

It is found in the cytoplasm. The catalysed reaction is tRNA(Met) + L-methionine + ATP = L-methionyl-tRNA(Met) + AMP + diphosphate. Is required not only for elongation of protein synthesis but also for the initiation of all mRNA translation through initiator tRNA(fMet) aminoacylation. The sequence is that of Methionine--tRNA ligase (metG) from Chlamydia muridarum (strain MoPn / Nigg).